The chain runs to 485 residues: Pyruvate kinase (485 aa).

A substrate-binding site is contributed by arginine 33. The K(+) site is built by asparagine 35, serine 37, aspartate 67, and threonine 68. An ATP-binding site is contributed by 35–38 (NFSH). 2 residues coordinate ATP: arginine 74 and lysine 155. Glutamate 221 provides a ligand contact to Mg(2+). Substrate-binding residues include glycine 244, aspartate 245, and threonine 277. Aspartate 245 serves as a coordination point for Mg(2+).

This sequence belongs to the pyruvate kinase family. As to quaternary structure, homotetramer. It depends on Mg(2+) as a cofactor. The cofactor is K(+).

It carries out the reaction pyruvate + ATP = phosphoenolpyruvate + ADP + H(+). The protein operates within carbohydrate degradation; glycolysis; pyruvate from D-glyceraldehyde 3-phosphate: step 5/5. This is Pyruvate kinase (pyk) from Chlamydia trachomatis serovar L2 (strain ATCC VR-902B / DSM 19102 / 434/Bu).